We begin with the raw amino-acid sequence, 221 residues long: Probable septum site-determining protein MinC (221 aa).

Belongs to the MinC family. As to quaternary structure, interacts with MinD and FtsZ.

Its function is as follows. Cell division inhibitor that blocks the formation of polar Z ring septums. Rapidly oscillates between the poles of the cell to destabilize FtsZ filaments that have formed before they mature into polar Z rings. Prevents FtsZ polymerization. This chain is Probable septum site-determining protein MinC, found in Shewanella denitrificans (strain OS217 / ATCC BAA-1090 / DSM 15013).